Here is a 109-residue protein sequence, read N- to C-terminus: Nucleoid-associated protein YbaB (109 aa).

It belongs to the YbaB/EbfC family. In terms of assembly, homodimer.

It localises to the cytoplasm. The protein resides in the nucleoid. Binds to DNA and alters its conformation. May be involved in regulation of gene expression, nucleoid organization and DNA protection. The protein is Nucleoid-associated protein YbaB of Escherichia coli O127:H6 (strain E2348/69 / EPEC).